We begin with the raw amino-acid sequence, 145 residues long: Peptide methionine sulfoxide reductase MsrB (145 aa).

Residues 4–127 form the MsrB domain; sequence SDELKQRIGD…NSAALKFIPY (124 aa). Cys116 serves as the catalytic Nucleophile.

The protein belongs to the MsrB Met sulfoxide reductase family.

The catalysed reaction is L-methionyl-[protein] + [thioredoxin]-disulfide + H2O = L-methionyl-(R)-S-oxide-[protein] + [thioredoxin]-dithiol. The protein is Peptide methionine sulfoxide reductase MsrB of Streptococcus pyogenes serotype M18 (strain MGAS8232).